Here is a 410-residue protein sequence, read N- to C-terminus: Porin-like protein GalP (410 aa).

Residues 1–25 (MKCRTLYPLVPTFALAASLPLQALA) form the signal peptide.

This sequence belongs to the outer membrane porin (Opr) (TC 1.B.25) family.

In terms of biological role, probable transporter, possibly involved in the gallate degradation pathway. May play a role in the uptake of low gallate concentrations that may exist in the natural habitats of P.putida. The sequence is that of Porin-like protein GalP (galP) from Pseudomonas putida (strain ATCC 47054 / DSM 6125 / CFBP 8728 / NCIMB 11950 / KT2440).